Here is a 120-residue protein sequence, read N- to C-terminus: Large ribosomal subunit protein bL19 (120 aa).

This sequence belongs to the bacterial ribosomal protein bL19 family.

Its function is as follows. This protein is located at the 30S-50S ribosomal subunit interface and may play a role in the structure and function of the aminoacyl-tRNA binding site. The protein is Large ribosomal subunit protein bL19 of Rippkaea orientalis (strain PCC 8801 / RF-1) (Cyanothece sp. (strain PCC 8801)).